A 248-amino-acid chain; its full sequence is Adenosylcobinamide-GDP ribazoletransferase (248 aa).

A run of 7 helical transmembrane segments spans residues 24-44 (EINL…IGAW), 70-90 (IIIT…GLFS), 106-126 (VGAN…SLFL), 134-154 (IGWL…LLFA), 168-188 (IFLG…LVAL), 189-209 (GAFF…FTII), and 228-248 (AGGQ…WGLI).

Belongs to the CobS family. It depends on Mg(2+) as a cofactor.

It localises to the cell membrane. The enzyme catalyses alpha-ribazole + adenosylcob(III)inamide-GDP = adenosylcob(III)alamin + GMP + H(+). The catalysed reaction is alpha-ribazole 5'-phosphate + adenosylcob(III)inamide-GDP = adenosylcob(III)alamin 5'-phosphate + GMP + H(+). It functions in the pathway cofactor biosynthesis; adenosylcobalamin biosynthesis; adenosylcobalamin from cob(II)yrinate a,c-diamide: step 7/7. In terms of biological role, joins adenosylcobinamide-GDP and alpha-ribazole to generate adenosylcobalamin (Ado-cobalamin). Also synthesizes adenosylcobalamin 5'-phosphate from adenosylcobinamide-GDP and alpha-ribazole 5'-phosphate. The chain is Adenosylcobinamide-GDP ribazoletransferase from Listeria monocytogenes serotype 4b (strain F2365).